A 178-amino-acid polypeptide reads, in one-letter code: Acireductone dioxygenase (178 aa).

Residues histidine 87, histidine 89, glutamate 93, and histidine 132 each contribute to the Fe(2+) site. Residues histidine 87, histidine 89, glutamate 93, and histidine 132 each coordinate Ni(2+).

It belongs to the acireductone dioxygenase (ARD) family. Fe(2+) is required as a cofactor. It depends on Ni(2+) as a cofactor.

The protein localises to the cytoplasm. It is found in the nucleus. The catalysed reaction is 1,2-dihydroxy-5-(methylsulfanyl)pent-1-en-3-one + O2 = 4-methylsulfanyl-2-oxobutanoate + formate + 2 H(+). It catalyses the reaction 1,2-dihydroxy-5-(methylsulfanyl)pent-1-en-3-one + O2 = 3-(methylsulfanyl)propanoate + CO + formate + 2 H(+). Its pathway is amino-acid biosynthesis; L-methionine biosynthesis via salvage pathway; L-methionine from S-methyl-5-thio-alpha-D-ribose 1-phosphate: step 5/6. In terms of biological role, catalyzes 2 different reactions between oxygen and the acireductone 1,2-dihydroxy-3-keto-5-methylthiopentene (DHK-MTPene) depending upon the metal bound in the active site. Fe-containing acireductone dioxygenase (Fe-ARD) produces formate and 2-keto-4-methylthiobutyrate (KMTB), the alpha-ketoacid precursor of methionine in the methionine recycle pathway. Ni-containing acireductone dioxygenase (Ni-ARD) produces methylthiopropionate, carbon monoxide and formate, and does not lie on the methionine recycle pathway. This Candida albicans (strain SC5314 / ATCC MYA-2876) (Yeast) protein is Acireductone dioxygenase.